A 510-amino-acid chain; its full sequence is NAD(P)H-quinone oxidoreductase subunit 2 B, chloroplastic (510 aa).

A run of 13 helical transmembrane segments spans residues 24–44 (LLLF…GLIL), 57–77 (IPWF…ALLF), 99–119 (IFQF…VEYI), 124–144 (MAIT…MFLC), 149–169 (LITI…LSGY), 183–203 (YLLM…WLYG), 227–247 (PGIL…LSLA), 295–315 (WHLL…LIAI), 323–343 (MLAY…IVGD), 354–374 (YMLF…LFGL), 395–415 (ALSL…AGFF), 428–448 (GLYF…YYYL), and 484–504 (MIVC…IIAI).

This sequence belongs to the complex I subunit 2 family. In terms of assembly, NDH is composed of at least 16 different subunits, 5 of which are encoded in the nucleus.

It localises to the plastid. The protein resides in the chloroplast thylakoid membrane. It catalyses the reaction a plastoquinone + NADH + (n+1) H(+)(in) = a plastoquinol + NAD(+) + n H(+)(out). The enzyme catalyses a plastoquinone + NADPH + (n+1) H(+)(in) = a plastoquinol + NADP(+) + n H(+)(out). Functionally, NDH shuttles electrons from NAD(P)H:plastoquinone, via FMN and iron-sulfur (Fe-S) centers, to quinones in the photosynthetic chain and possibly in a chloroplast respiratory chain. The immediate electron acceptor for the enzyme in this species is believed to be plastoquinone. Couples the redox reaction to proton translocation, and thus conserves the redox energy in a proton gradient. This is NAD(P)H-quinone oxidoreductase subunit 2 B, chloroplastic from Eucalyptus globulus subsp. globulus (Tasmanian blue gum).